The sequence spans 942 residues: AP-1 complex subunit beta (942 aa).

HEAT repeat units follow at residues 45–82 (KDVS…NHPD), 117–154 (NITE…VNPE), 156–193 (VENQ…VSKK), 273–313 (DVIR…KRPE), 384–421 (RASE…KYPN), and 458–495 (DNAH…KRPK). A disordered region spans residues 590–700 (GLRNKEEEDE…NDLSFLGGGG (111 aa)). Residues 596–609 (EEDEEEPDYVDDDN) are compositionally biased toward acidic residues. 2 stretches are compositionally biased toward low complexity: residues 613–645 (QQGG…QQQP) and 664–677 (NNNN…NNNN). Polar residues predominate over residues 678-693 (MYSPQPQQFNGNSNDL).

It belongs to the adaptor complexes large subunit family. Adaptor protein complex 1 (AP-1) is a heterotetramer composed of two large adaptins (gamma-type subunit and beta-type subunit), a medium adaptin (mu-type subunit) and a small adaptin (sigma-type subunit).

It localises to the golgi apparatus. Its subcellular location is the trans-Golgi network. The protein resides in the cytoplasmic vesicle. It is found in the clathrin-coated vesicle membrane. In terms of biological role, subunit of clathrin-associated adaptor protein complex 1 that plays a role in protein sorting in the trans-Golgi network (TGN) and endosomes. The AP complexes mediate the recruitment of clathrin to membranes and the recognition of sorting signals within the cytosolic tails of transmembrane cargo molecules. Also involved in early steps of phagocytosis and macropinocytosis. The polypeptide is AP-1 complex subunit beta (ap1b1) (Dictyostelium discoideum (Social amoeba)).